The sequence spans 178 residues: ATP synthase subunit delta (178 aa).

The protein belongs to the ATPase delta chain family. In terms of assembly, F-type ATPases have 2 components, F(1) - the catalytic core - and F(0) - the membrane proton channel. F(1) has five subunits: alpha(3), beta(3), gamma(1), delta(1), epsilon(1). F(0) has three main subunits: a(1), b(2) and c(10-14). The alpha and beta chains form an alternating ring which encloses part of the gamma chain. F(1) is attached to F(0) by a central stalk formed by the gamma and epsilon chains, while a peripheral stalk is formed by the delta and b chains.

It is found in the cell inner membrane. Its function is as follows. F(1)F(0) ATP synthase produces ATP from ADP in the presence of a proton or sodium gradient. F-type ATPases consist of two structural domains, F(1) containing the extramembraneous catalytic core and F(0) containing the membrane proton channel, linked together by a central stalk and a peripheral stalk. During catalysis, ATP synthesis in the catalytic domain of F(1) is coupled via a rotary mechanism of the central stalk subunits to proton translocation. This protein is part of the stalk that links CF(0) to CF(1). It either transmits conformational changes from CF(0) to CF(1) or is implicated in proton conduction. The protein is ATP synthase subunit delta of Pseudomonas syringae pv. tomato (strain ATCC BAA-871 / DC3000).